Reading from the N-terminus, the 88-residue chain is uncharacterized protein (88 aa).

A dksA C4-type zinc finger spans residues Cys-39–Cys-63.

This is an uncharacterized protein from Escherichia coli (strain K12).